The sequence spans 103 residues: Large ribosomal subunit protein bL21 (103 aa).

It belongs to the bacterial ribosomal protein bL21 family. Part of the 50S ribosomal subunit. Contacts protein L20.

Functionally, this protein binds to 23S rRNA in the presence of protein L20. This Paracidovorax citrulli (strain AAC00-1) (Acidovorax citrulli) protein is Large ribosomal subunit protein bL21.